We begin with the raw amino-acid sequence, 88 residues long: Sec-independent protein translocase protein TatA (88 aa).

Residues 1–21 (MGSLSPWHWAILAVVVIVLFG) traverse the membrane as a helical segment. Over residues 43-52 (MREMQSETKA) the composition is skewed to basic and acidic residues. Residues 43 to 88 (MREMQSETKAEPSAIETNTANPTPVQSQRIDPAAATGQDQTEARPA) are disordered. Over residues 57–71 (IETNTANPTPVQSQR) the composition is skewed to polar residues.

The protein belongs to the TatA/E family. As to quaternary structure, the Tat system comprises two distinct complexes: a TatABC complex, containing multiple copies of TatA, TatB and TatC subunits, and a separate TatA complex, containing only TatA subunits. Substrates initially bind to the TatABC complex, which probably triggers association of the separate TatA complex to form the active translocon.

Its subcellular location is the cell membrane. In terms of biological role, part of the twin-arginine translocation (Tat) system that transports large folded proteins containing a characteristic twin-arginine motif in their signal peptide across membranes. TatA could form the protein-conducting channel of the Tat system. The protein is Sec-independent protein translocase protein TatA of Mycobacterium marinum (strain ATCC BAA-535 / M).